Here is a 105-residue protein sequence, read N- to C-terminus: Large ribosomal subunit protein bL21 (105 aa).

This sequence belongs to the bacterial ribosomal protein bL21 family. As to quaternary structure, part of the 50S ribosomal subunit. Contacts protein L20.

Its function is as follows. This protein binds to 23S rRNA in the presence of protein L20. The polypeptide is Large ribosomal subunit protein bL21 (Porphyromonas gingivalis (strain ATCC BAA-308 / W83)).